The primary structure comprises 187 residues: MELGLTGKLLVAAPALAETFFERTVIYLCAHSEQDGAMGLIVNRRLSQPGLDDLFAQLGIEPSPPERRIGVCMGGPVEHARGFVLHSADWAGEGSLDVDGHTTLTASLDILREIAAGHGPRQAVMALGHAAWAPGQLEEEILRDSSWFIAPATDEIVFGTDHAKKWRQALVAIDFDPLLLSSSVGEA.

The protein belongs to the UPF0301 (AlgH) family.

The protein is UPF0301 protein GOX1459 of Gluconobacter oxydans (strain 621H) (Gluconobacter suboxydans).